A 197-amino-acid polypeptide reads, in one-letter code: FMN-dependent NADH:quinone oxidoreductase (197 aa).

Residue Ser-10 coordinates FMN.

It belongs to the azoreductase type 1 family. As to quaternary structure, homodimer. The cofactor is FMN.

It carries out the reaction 2 a quinone + NADH + H(+) = 2 a 1,4-benzosemiquinone + NAD(+). It catalyses the reaction N,N-dimethyl-1,4-phenylenediamine + anthranilate + 2 NAD(+) = 2-(4-dimethylaminophenyl)diazenylbenzoate + 2 NADH + 2 H(+). Quinone reductase that provides resistance to thiol-specific stress caused by electrophilic quinones. In terms of biological role, also exhibits azoreductase activity. Catalyzes the reductive cleavage of the azo bond in aromatic azo compounds to the corresponding amines. The chain is FMN-dependent NADH:quinone oxidoreductase from Mycoplasma pneumoniae (strain ATCC 29342 / M129 / Subtype 1) (Mycoplasmoides pneumoniae).